A 1417-amino-acid chain; its full sequence is MNNGILHQNYNSKKFDIIKISLASPEVIRSWSHGEVKKPETINYRTFKPERDGLFCAKIFGPIKDYECLCGKYKRLKHRGVVCERCGVEVEQAKVRRERMGHIDLVCPVVHIWYLKSLPSRIGLFLDMPLKNVEKVLYFESYIVTDPGMTPLEKKQLLTDEEYAEALENYGYEFEASMGAEAIRDLLADTDIESEIELLQAECEESKSTAKKEKAIKRLRLLETFQASGNKPEWMVMTVLPVLPPDLRPLVPIEGGRFATSDLNDLYRRVINRNNRLKKLLDLNAPDIIVRNEKRMLQEAVDALLDNGRRGRAVTGSNKRPLKSLADMIKGKQGRFRQNLLGKRVDYSGRSVITVGPSLRLHECGLPKKMALELFKPFVYSKLRLGGHATTIKQAKRMVELEEAVVWDILETVINEHPVLLNRAPTLHRLGIQAFEPRLIEGKAIQLHPLVCAAFNADFDGDQMAVHVPLTVESQLEARVLMMSTNNILSPASGQPIITPTQDIVLGLYYITREKEGARGEGKLFSSYEDVSRAYNSGTIDIHAKIKLRIDRQVFDTKGNTYNEKGVVNTTVGRALLLNILPEGLSFSLLNKVLVKKEISKIINQAFRVLGGKATVVLADKLMYAGFKYSTLSGVSVGVDDMTIPDNKEAKIEEAEKEIKQITEQYQSSLITENERYNNIINIWSKTSDEVGASMMDAISKDTVSINGEKKEIESFNSVYMMAKSGARGSYNQMRQLAGMRGLMAKPDGTMIETAITANFREGLSVLQYFTSTHGARKGLADTALKTANAGYLTRRLVDVAQDLVVIEEDCGTDDGLMFSAIVEDGEVKVPLVERALGRTLAADVVTEKGVVLLEAGTLLDENLVELLDDNGIDMIKVRSPITCKTRRGLCAKCYGRDLARERQVNVGESVGVIAAQSIGEPGTQLTMRTFHTGGAASLGITVSDIKVKTAGKIKFKNIRTVTNKEGQEIVISRAGEIIVSDTMGRVREQHKIPMGAVVPLASGKAVEIGDVIATWDPHAQPLITDVAGKVVLEDVIDGITSKHTYDDLTGQQTIEITSISQRTTSKNLKPVVKIVDEKGAELKSIPLAVGAVLNVADDSILEVGDIVAKIPLEGSKNKDITGGLPRVAELFEARRPKDAAILSPCDGMVRLGNRDTKEKQRIEIIDKNGHIVEEILLPKSRHLVVFDGEQVSRGDVLADGPTDPHDLLKYKGLEEFADYILIEAQSVYRMQGVVINDKHIETIVRQMLRKAVILDEGDSKFVKDESIELVRILEENDKLRKQGKKEVEYELVLMGITRSSLSTESFLSAASFQETTRVLTEASINSQIDNLRGLKENVLIGRLIPAGTGLAVRKESAKIEKMREELGVEDNMVFTDLSSFNPEEISFDSIQSQKEDKDINEDIEESLRNALESLDF.

Zn(2+)-binding residues include Cys-68, Cys-70, Cys-83, and Cys-86. Mg(2+) is bound by residues Asp-458, Asp-460, and Asp-462. Positions 811, 884, 891, and 894 each coordinate Zn(2+).

The protein belongs to the RNA polymerase beta' chain family. As to quaternary structure, the RNAP catalytic core consists of 2 alpha, 1 beta, 1 beta' and 1 omega subunit. When a sigma factor is associated with the core the holoenzyme is formed, which can initiate transcription. The cofactor is Mg(2+). Zn(2+) is required as a cofactor.

The enzyme catalyses RNA(n) + a ribonucleoside 5'-triphosphate = RNA(n+1) + diphosphate. Its function is as follows. DNA-dependent RNA polymerase catalyzes the transcription of DNA into RNA using the four ribonucleoside triphosphates as substrates. The protein is DNA-directed RNA polymerase subunit beta' of Francisella tularensis subsp. holarctica (strain OSU18).